The primary structure comprises 198 residues: WKDDIKIDQEAVKAYVGGEFKPNAGAHAGRDWGKFDIEAEVVGLCPTGCMTYESGTLSIDNKNCTRCMHCINTMPRALKIGDERGASILVGAKAPVLDGAQMGSLLIPFIAAEEPFDEVKEVIENIWEWWMEEGKNRERLGETMKRVGFQKLLEVTGTKAVPQHVSEPRHNPYIFFKEEEVPGGWSRDISDYRKRHMR.

Positions 45, 64, 67, and 70 each coordinate [4Fe-4S] cluster. One can recognise a 4Fe-4S ferredoxin-type domain in the interval 55 to 83 (GTLSIDNKNCTRCMHCINTMPRALKIGDE).

Heterohexamer of two alpha, two beta and two gamma subunits.

Its function is as follows. Part of the complex that catalyzes the reduction of sulfite to sulfide. The alpha and beta subunits may have arisen by gene duplication. They both bind 2 iron-sulfur clusters, but the alpha subunit seems to be catalytically inactive, due to substitutions along the putative substrate access channel, and because it binds sirohydrochlorin (the dematallated form of siroheme) instead of siroheme. This Megalodesulfovibrio gigas (strain ATCC 19364 / DSM 1382 / NCIMB 9332 / VKM B-1759) (Desulfovibrio gigas) protein is Sulfite reductase, dissimilatory-type subunit alpha (dsrA).